Reading from the N-terminus, the 820-residue chain is MTEQLLLHGTLEVKIYRIDKLHQRSRFNLCGKGNKEPTGKKTQSQIKRLTDSCTSLFGGHLYATIDLDRSRVARTMMRRHPKWLQSFHVYTAHSISKIIFTVKEDEPVSASLIGRAYLPVTEVITGQPIDRWLDILDENRRPIQGGSKLHVRVKFTHVTQDVNWNKGIILPSFNGVPNAYFNQREGCKVTLYQDAHVLNEYPDVTLTGGQVIYKHHRCWEEIFDAIWEAKHLIYIAGWSVNTDVTLVRDPKRTRPGGDLKLGELLKKKAEENVTVLMLVWDDRTSHEVFKRDGLMMTHDQETYDYFKNTKVRCVLCPRNPDNGDSIVQGFEVATMFTHHQKTIVVDSEVDGSLTKRRIVSFLGGIDLCDGRYDTVEHPLFGTLNSVHANDFHQPNFDGASIKKGGPREPWHDIHCKLDGPAAWDVLYNFEQRWMKQGSGRRYLISMAQLAEITVPPLPIVQPDNEEGWTVQVFRSIDDGAVEGFPEDPREAASIGLISGKDNVIERSIQDAYVNAIRRAKNFIYIENQYFLGSSFGWNSRDINLNEINALQLIPKEISLKIVSKIEAGERFSVYIVIPLWPEGKPGSASVQAILDWQRRTMEMMYTDIIIALRKKGLDANPRDYLTFFCLGNREKGKVGEYLPPEKPEANSDYARAQESRRFMIYVHSKMMIVDDEYIIIGSANINQRSMDGGRDTEIAMGAYQPSHLLSTNNMRPVGQIFSFRISLWLEHLRVTTNAFQCPESEECIRMVNATADELWGLYSAQEYPRNDDLPGHLLSYPISIGSNGEVTNLAGTEFFPDTNAKVVGEKSNYLPPILTS.

One can recognise a C2 domain in the interval Met-1–Leu-133. Asp-194 provides a ligand contact to Ca(2+). Positions Thr-334–Arg-371 constitute a PLD phosphodiesterase 1 domain. Catalysis depends on residues His-339, Lys-341, and Asp-346. Residue His-339 participates in a 1,2-diacyl-sn-glycero-3-phosphate binding. Ca(2+) is bound by residues His-377 and His-411. A 1,2-diacyl-sn-glycero-3-phosphate is bound by residues Gln-528 and His-667. Residues Phe-662–Ser-689 form the PLD phosphodiesterase 2 domain. Residues His-667, Lys-669, and Asp-674 contribute to the active site. Glu-730 provides a ligand contact to Ca(2+).

The protein belongs to the phospholipase D family. C2-PLD subfamily. Requires Ca(2+) as cofactor. In terms of tissue distribution, expressed in buds, flowers, siliques, stems, old leaves and roots. Expressed in the sieve elements.

The protein localises to the cytoplasm. It is found in the membrane. The enzyme catalyses a 1,2-diacyl-sn-glycero-3-phosphocholine + H2O = a 1,2-diacyl-sn-glycero-3-phosphate + choline + H(+). Functionally, hydrolyzes glycerol-phospholipids at the terminal phosphodiesteric bond to generate phosphatidic acids (PA). Active with phosphatidylcholine (PC), phosphatidylethanolamine (PE), phosphatidylglycerol (PG), and phosphatidylserine (PS) as substrates. No activity toward phosphatidylinositol (PI) or PIP2. Positively mediates plant responses to hyperosmotic stresses and promotes root growth, flowering, and stress avoidance. Not involved in the abscisic acid regulation of stomatal movement and transpirational water loss. The protein is Phospholipase D alpha 3 of Arabidopsis thaliana (Mouse-ear cress).